The following is a 454-amino-acid chain: Phosphoglucosamine mutase (454 aa).

Ser101 (phosphoserine intermediate) is an active-site residue. Residues Ser101, Asp243, Asp245, and Asp247 each coordinate Mg(2+). Ser101 is subject to Phosphoserine.

This sequence belongs to the phosphohexose mutase family. It depends on Mg(2+) as a cofactor. Post-translationally, activated by phosphorylation.

The catalysed reaction is alpha-D-glucosamine 1-phosphate = D-glucosamine 6-phosphate. Functionally, catalyzes the conversion of glucosamine-6-phosphate to glucosamine-1-phosphate. In Citrifermentans bemidjiense (strain ATCC BAA-1014 / DSM 16622 / JCM 12645 / Bem) (Geobacter bemidjiensis), this protein is Phosphoglucosamine mutase.